Consider the following 896-residue polypeptide: Cytokine receptor common subunit beta (896 aa).

The first 22 residues, 1–22 (MDQQMALTWGLCYMALVALCWG), serve as a signal peptide directing secretion. Topologically, residues 23-441 (HGVTEAEETV…SEEYTWKTDW (419 aa)) are extracellular. Cysteine 39 and cysteine 49 are joined by a disulfide. The N-linked (GlcNAc...) asparagine glycan is linked to asparagine 62. Disulfide bonds link cysteine 77–cysteine 99 and cysteine 88–cysteine 94. Residues 136 to 243 (PPLPKNVSIS…PEVHWDSQPG (108 aa)) form the Fibronectin type-III 1 domain. N-linked (GlcNAc...) asparagine glycosylation occurs at asparagine 141. A compositionally biased stretch (low complexity) spans 220 to 233 (SPGSSLSGRPSRWS). The segment at 220–243 (SPGSSLSGRPSRWSPEVHWDSQPG) is disordered. 2 disulfide bridges follow: cysteine 253-cysteine 263 and cysteine 292-cysteine 310. A Fibronectin type-III 2 domain is found at 343 to 439 (QMEPPTLNLT…KWSEEYTWKT (97 aa)). N-linked (GlcNAc...) asparagine glycosylation is present at asparagine 350. Residues 428 to 432 (WSKWS) carry the WSXWS motif motif. The helical transmembrane segment at 442-463 (VMPTLWIVLILVFLILTLLLIL) threads the bilayer. Topologically, residues 464–896 (RFGCVSVYRT…WDNSQSGKVC (433 aa)) are cytoplasmic. The Box 1 motif motif lies at 477-485 (WKEKIPNPS). Disordered stretches follow at residues 543-620 (EDPN…GGSL) and 658-725 (CGSS…TGPL). Polar residues-rich tracts occupy residues 555–571 (PDTTPAASSESTEQLPN) and 658–668 (CGSSLETSGSP). Over residues 716–725 (PVLTLPTGPL) the composition is skewed to low complexity. Phosphoserine occurs at positions 752 and 754. Phosphotyrosine is present on tyrosine 765. The tract at residues 771–810 (SVSQAAKSPPGHPAPPVASSPTVIPGEPREEVGPASPHPE) is disordered.

This sequence belongs to the type I cytokine receptor family. Type 4 subfamily. In terms of assembly, heterodimer of an alpha and a beta subunit. The beta subunit is common to the IL3, IL5 and GM-CSF receptors. The signaling GM-CSF receptor complex is a dodecamer of two head-to-head hexamers of two alpha, two beta, and two ligand subunits. Interacts with TMEM102; this interaction occurs preferentially in the absence of CSF2. Interacts with FCER1G; this interaction is direct. Interacts with LYN. May be phosphorylated by LYN.

It localises to the membrane. Its function is as follows. High affinity receptor for interleukin-3, interleukin-5 and granulocyte-macrophage colony-stimulating factor. This Mus musculus (Mouse) protein is Cytokine receptor common subunit beta (Csf2rb).